The sequence spans 135 residues: BolA-like protein 1 (135 aa).

Position 81 is a phosphoserine (serine 81). The disordered stretch occupies residues tryptophan 114–asparagine 135.

The protein belongs to the BolA/IbaG family. In terms of assembly, interacts with GLRX5.

It is found in the mitochondrion. In terms of biological role, acts as a mitochondrial iron-sulfur (Fe-S) cluster assembly factor that facilitates (Fe-S) cluster insertion into a subset of mitochondrial proteins. Probably acts together with the monothiol glutaredoxin GLRX5. May protect cells against oxidative stress. The protein is BolA-like protein 1 (BOLA1) of Bos taurus (Bovine).